A 252-amino-acid polypeptide reads, in one-letter code: Probable ABC transporter ATP-binding protein p29 (252 aa).

The region spanning 8-252 (LEIKNLTFKN…NILDQVFKND (245 aa)) is the ABC transporter domain. ATP is bound at residue 42–49 (GSSGQGKS).

It belongs to the ABC transporter superfamily.

Part of a high-affinity transport system. In Mesomycoplasma hyorhinis (Mycoplasma hyorhinis), this protein is Probable ABC transporter ATP-binding protein p29.